A 387-amino-acid polypeptide reads, in one-letter code: 3-ketoacyl-CoA thiolase (387 aa).

The active-site Acyl-thioester intermediate is Cys-91. Residues His-343 and Cys-373 each act as proton acceptor in the active site.

Belongs to the thiolase-like superfamily. Thiolase family. As to quaternary structure, heterotetramer of two alpha chains (FadB) and two beta chains (FadA).

It is found in the cytoplasm. The catalysed reaction is an acyl-CoA + acetyl-CoA = a 3-oxoacyl-CoA + CoA. Its pathway is lipid metabolism; fatty acid beta-oxidation. In terms of biological role, catalyzes the final step of fatty acid oxidation in which acetyl-CoA is released and the CoA ester of a fatty acid two carbons shorter is formed. In Shewanella sp. (strain MR-7), this protein is 3-ketoacyl-CoA thiolase.